The primary structure comprises 371 residues: Homeobox protein Nkx-2.1 (371 aa).

The segment at residues 161 to 220 (RRKRRVLFSQAQVYELERRFKQQKYLSAPEREHLASMIHLTPTQVKIWFQNHRYKMKRQA) is a DNA-binding region (homeobox). Disordered stretches follow at residues 219 to 294 (QAKD…QHQA) and 310 to 339 (GAGLGAHPGHQPGSAGQSPDLAHHAASPAA). Gly residues predominate over residues 233–243 (SGGGGGGGGTG). The span at 244-253 (CPQQQQAQQQ) shows a compositional bias: low complexity. Ser-254 carries the phosphoserine modification. Low complexity predominate over residues 272-294 (AGAPAPGAASLQGHAQQQAQHQA).

This sequence belongs to the NK-2 homeobox family. Interacts with WWTR1. In terms of processing, phosphorylated on serine residues by STK3/MST2. In terms of tissue distribution, thyroid and lung.

Its subcellular location is the nucleus. In terms of biological role, transcription factor that binds and activates the promoter of thyroid specific genes such as thyroglobulin, thyroperoxidase, and thyrotropin receptor. Crucial in the maintenance of the thyroid differentiation phenotype. May play a role in lung development and surfactant homeostasis. Forms a regulatory loop with GRHL2 that coordinates lung epithelial cell morphogenesis and differentiation. Activates the transcription of GNRHR and plays a role in enhancing the circadian oscillation of its gene expression. Represses the transcription of the circadian transcriptional repressor NR1D1. This Homo sapiens (Human) protein is Homeobox protein Nkx-2.1.